The chain runs to 277 residues: Hematopoietically-expressed homeobox protein HHEX (277 aa).

2 disordered regions span residues 47–69 (AAPA…NSSF) and 199–277 (WRRL…SATR). Residues 52 to 63 (HSLPAPPPPTLP) show a composition bias toward pro residues. The homeobox DNA-binding region spans 144 to 203 (RKGGQVRFSNEQTIELEKKFETQKYLSPPERKRLAKLLQLSERQVKTWFQNRRAKWRRLK). The segment covering 210–226 (TKKEEAEGTGDHGDPRS) has biased composition (basic and acidic residues). The segment covering 250–266 (EDPESDVSDDSDQEVDI) has biased composition (acidic residues).

In terms of tissue distribution, in all hematopoietic tissues except peripheral blood erythrocytes and in the liver and lung.

It localises to the nucleus. Functionally, recognizes the DNA sequence 5'-ATTAA-3'. Transcriptional repressor. May play a role in hematopoietic differentiation. In Gallus gallus (Chicken), this protein is Hematopoietically-expressed homeobox protein HHEX (HHEX).